The sequence spans 298 residues: DDRGK domain-containing protein 1 (298 aa).

The helical transmembrane segment at 1-21 (MDIVLYFVAVPILIVLIVSAV) threads the bilayer. At 22-298 (KVRGKTEEDN…NLIPEIHNTA (277 aa)) the chain is on the cytoplasmic side. The disordered stretch occupies residues 71–149 (NSAYREAADN…EERRKEDKKE (79 aa)). Positions 82 to 94 (SPVEVEEEYEEAE) are enriched in acidic residues. The segment covering 110–149 (KLEEKQAKRAQREAELEEREERKRTQELREEERRKEDKKE) has biased composition (basic and acidic residues). The UFM1-interacting motif (UFIM) motif lies at 181–195 (SFVVEEQGEADELTE). The region spanning 215 to 259 (VLLEDLASHFGLRTQDAISRLQDLLSDGSITGVIDDRGKFIFITP) is the PCI domain.

This sequence belongs to the DDRGK1 family. In terms of assembly, component of the UFM1 ribosome E3 ligase (UREL) complex, composed of ufl1, ddrgk1 and cdk5rap3.

Its subcellular location is the endoplasmic reticulum membrane. Its function is as follows. Component of the UFM1 ribosome E3 ligase (UREL) complex, a multiprotein complex that catalyzes ufmylation of endoplasmic reticulum-docked proteins. The UREL complex plays a key role in ribosome recycling by mediating mono-ufmylation of the RPL26/uL24 subunit of the 60S ribosome following ribosome dissociation: ufmylation weakens the junction between post-termination 60S subunits and SEC61 translocons, promoting release and recycling of the large ribosomal subunit from the endoplasmic reticulum membrane. Ufmylation of RPL26/uL24 and subsequent 60S ribosome recycling either take place after normal termination of translation or after ribosome stalling during cotranslational translocation at the endoplasmic reticulum. Within the UREL complex, DDRGK1 tethers the complex to the endoplasmic reticulum membrane to restrict its activity to endoplasmic reticulum-docked ribosomes and acts as an ufmylation 'reader': following RPL26/uL24 ufmylation, DDRGK1 specifically binds to ufmylated RPL26/uL24 via its UFIM motif, resulting in stable association between the 60S ribosome and the UREL complex, followed by dissociation of the 60S ribosome subunit from the endoplasmic reticulum membrane. The UREL complex is also involved in reticulophagy in response to endoplasmic reticulum stress by promoting ufmylation of proteins such as CYB5R3 and RPN1, thereby promoting lysosomal degradation of ufmylated proteins. Required for stabilization and ufmylation of ATG9A. The polypeptide is DDRGK domain-containing protein 1 (Osmerus mordax (Rainbow smelt)).